Reading from the N-terminus, the 178-residue chain is Probable chorismate pyruvate-lyase (178 aa).

Residues methionine 37, arginine 78, leucine 114, and glutamate 165 each contribute to the substrate site.

Belongs to the UbiC family.

Its subcellular location is the cytoplasm. The enzyme catalyses chorismate = 4-hydroxybenzoate + pyruvate. Its pathway is cofactor biosynthesis; ubiquinone biosynthesis. Functionally, removes the pyruvyl group from chorismate, with concomitant aromatization of the ring, to provide 4-hydroxybenzoate (4HB) for the ubiquinone pathway. The sequence is that of Probable chorismate pyruvate-lyase from Aeromonas salmonicida (strain A449).